The following is a 574-amino-acid chain: NEDD4-binding protein 2-like 2 (574 aa).

Disordered stretches follow at residues 82 to 110 (HKEMPGDKVGGTESIGSQALQDGKPLAPA), 127 to 161 (YKPPEKKKCRERKNETATFNNTDSKRRQEEKQKFN), 182 to 204 (ENENEASQGSCKEPEPSQEQTLS), and 542 to 574 (TQKSTQTPLPLQGDQRWGGSLGSHSQVSITDDY). Composition is skewed to basic and acidic residues over residues 129 to 141 (PPEKKKCRERKNE) and 149 to 161 (DSKRRQEEKQKFN). A coiled-coil region spans residues 162–196 (SKKLEIDTELSQFYKEIEELENENEASQGSCKEPE). The segment covering 563–574 (GSHSQVSITDDY) has biased composition (polar residues).

In Rattus norvegicus (Rat), this protein is NEDD4-binding protein 2-like 2 (N4bp2l2).